A 373-amino-acid chain; its full sequence is RNA 3'-terminal phosphate cyclase-like protein (373 aa).

This sequence belongs to the RNA 3'-terminal cyclase family. Type 2 subfamily. Part of the small subunit (SSU) processome, composed of more than 70 proteins and the RNA chaperone small nucleolar RNA (snoRNA) U3. Interacts with BMS1.

Its subcellular location is the nucleus. The protein resides in the nucleolus. As part of the small subunit (SSU) processome, it plays a role in 40S-ribosomal-subunit biogenesis in the early pre-rRNA processing steps at sites A0, A1 and A2 that are required for proper maturation of the 18S RNA. Activates BMS1 by promoting GDP/GTP exchange. Does not have cyclase activity. The protein is RNA 3'-terminal phosphate cyclase-like protein of Homo sapiens (Human).